The sequence spans 121 residues: Small ribosomal subunit protein uS13 (121 aa).

The interval 88–121 (GMRHRRGLPTRGQNTKNNARTRKGPAKSIAGKKK) is disordered. The segment covering 106-121 (ARTRKGPAKSIAGKKK) has biased composition (basic residues).

The protein belongs to the universal ribosomal protein uS13 family. In terms of assembly, part of the 30S ribosomal subunit. Forms a loose heterodimer with protein S19. Forms two bridges to the 50S subunit in the 70S ribosome.

Functionally, located at the top of the head of the 30S subunit, it contacts several helices of the 16S rRNA. In the 70S ribosome it contacts the 23S rRNA (bridge B1a) and protein L5 of the 50S subunit (bridge B1b), connecting the 2 subunits; these bridges are implicated in subunit movement. Contacts the tRNAs in the A and P-sites. The protein is Small ribosomal subunit protein uS13 of Lactococcus lactis subsp. cremoris (strain MG1363).